The chain runs to 253 residues: Tabinhibitin 3 (253 aa).

The first 22 residues, 1–22 (MTLKRIFCAALALIVLQSVASA), serve as a signal peptide directing secretion. Residues 66-209 (LQKTNWLRGV…LKRALFTCNF (144 aa)) enclose the SCP domain. The Cell attachment site motif lies at 222–224 (RGD).

It belongs to the CRISP family. In terms of tissue distribution, expressed in salivary glands.

It is found in the secreted. Functionally, inhibits platelet aggregation induced by all agonists tested (ADP, arachidonic acid, the thromboxane A2 analog U46619, thrombin, and snake venom snaclecs (TMVA that activates platelet through GPIB, and stejnulxin that specifically acts through GPVI (GP6))). May act by competing with fibrinogen for binding to glycoprotein IIb/IIIa (ITGA2B/ITGB3). This Tabanus yao (Horsefly) protein is Tabinhibitin 3.